The following is a 487-amino-acid chain: DEAD-box ATP-dependent RNA helicase CshA (487 aa).

A Q motif motif is present at residues 3–31 (ITFQDFQLSSDLTKAIKRMGFEEATPIQA). In terms of domain architecture, Helicase ATP-binding spans 34–204 (IPLGLANKDV…ERFMTNPEHV (171 aa)). Position 47-54 (47-54 (AQTGTGKT)) interacts with ATP. The DEAD box signature appears at 152–155 (DEAD). Residues 215-375 (NIQQFYLEVH…RMKAPTLDEA (161 aa)) enclose the Helicase C-terminal domain. A compositionally biased stretch (basic and acidic residues) spans 428–440 (DNTPVRLTEEAPL). A disordered region spans residues 428-487 (DNTPVRLTEEAPLRTKRNKNHHHRSSKRRDGGGYRGKNNRSSYDKKRSSNDRRQKKSYNS). A compositionally biased stretch (basic residues) spans 441-454 (RTKRNKNHHHRSSK). The segment covering 469–479 (SYDKKRSSNDR) has biased composition (basic and acidic residues).

The protein belongs to the DEAD box helicase family. CshA subfamily. As to quaternary structure, oligomerizes, may be a member of the RNA degradosome.

The protein resides in the cytoplasm. It catalyses the reaction ATP + H2O = ADP + phosphate + H(+). Its function is as follows. DEAD-box RNA helicase possibly involved in RNA degradation. Unwinds dsRNA in both 5'- and 3'-directions, has RNA-dependent ATPase activity. This is DEAD-box ATP-dependent RNA helicase CshA from Bacillus licheniformis (strain ATCC 14580 / DSM 13 / JCM 2505 / CCUG 7422 / NBRC 12200 / NCIMB 9375 / NCTC 10341 / NRRL NRS-1264 / Gibson 46).